Reading from the N-terminus, the 2335-residue chain is uncharacterized protein (2335 aa).

A run of 6 helical transmembrane segments spans residues 114–134 (FMIG…AHII), 148–167 (FISG…SIVF), 172–194 (VVIP…IVKY), 214–234 (IFFL…PFLS), 255–275 (EFGF…LSLL), and 307–327 (FVNL…IAYF). Positions 1043 to 1052 (ATSESISFNQ) are enriched in polar residues. Residues 1043 to 1064 (ATSESISFNQTKEKSNSTLGRL) are disordered. 2 coiled-coil regions span residues 1174–1202 (VTLK…MKEA) and 1417–1447 (KKRE…EKIV). Residues 1458-1471 (QTSQLTKNSFNPSR) show a composition bias toward polar residues. The disordered stretch occupies residues 1458–1479 (QTSQLTKNSFNPSRQKTDKNLE). The chain crosses the membrane as a helical span at residues 2086–2106 (VWFPSGSLSQQVLPVHYIYVF). The tract at residues 2200–2222 (KQEKRILKSKQRRKITDSKQSTE) is disordered.

This sequence belongs to the ycf78 family.

Its subcellular location is the plastid. It is found in the chloroplast membrane. This is an uncharacterized protein from Tetradesmus obliquus (Green alga).